The primary structure comprises 129 residues: Large ribosomal subunit protein bL19 (129 aa).

This sequence belongs to the bacterial ribosomal protein bL19 family.

In terms of biological role, this protein is located at the 30S-50S ribosomal subunit interface and may play a role in the structure and function of the aminoacyl-tRNA binding site. This chain is Large ribosomal subunit protein bL19, found in Rhizorhabdus wittichii (strain DSM 6014 / CCUG 31198 / JCM 15750 / NBRC 105917 / EY 4224 / RW1) (Sphingomonas wittichii).